A 358-amino-acid chain; its full sequence is Peptide chain release factor 1 (358 aa).

N5-methylglutamine is present on Gln235. The interval 284–309 (KVESERSASRKSQVGSGDRSERIRTY) is disordered.

It belongs to the prokaryotic/mitochondrial release factor family. Post-translationally, methylated by PrmC. Methylation increases the termination efficiency of RF1.

The protein localises to the cytoplasm. Peptide chain release factor 1 directs the termination of translation in response to the peptide chain termination codons UAG and UAA. The chain is Peptide chain release factor 1 from Bartonella tribocorum (strain CIP 105476 / IBS 506).